The chain runs to 403 residues: Na(+)/H(+) antiporter NhaH (403 aa).

Helical transmembrane passes span 7–27, 34–54, 99–119, 125–145, 168–188, 196–216, 228–245, 250–272, 282–302, 311–331, 345–365, and 373–393; these read VFIQ…IAKL, VALV…IEEA, LAFL…YFLL, VAFT…LSIF, IAVV…EMGW, FMFL…GYVF, LEVA…FIAE, SGVI…IGMS, FWDS…GLEI, WGYI…AVYI, ILIN…LSLP, and QVLL…GLTL.

It belongs to the monovalent cation:proton antiporter 1 (CPA1) transporter (TC 2.A.36) family.

The protein resides in the cell membrane. Na(+)/H(+) antiporter that extrudes sodium in exchange for external protons. Can also transport lithium. The sequence is that of Na(+)/H(+) antiporter NhaH (nhaH) from Halobacillus aidingensis.